A 420-amino-acid polypeptide reads, in one-letter code: uncharacterized protein (420 aa).

Disordered stretches follow at residues 84–103 (RSQANSESTPPEHTWSGTSE) and 122–211 (SMNN…NKKS). The segment covering 85-103 (SQANSESTPPEHTWSGTSE) has biased composition (polar residues). Basic and acidic residues predominate over residues 184-199 (SMTDQEVEQRRKEANK). 2 coiled-coil regions span residues 265–310 (TEKE…TATN) and 345–374 (LQFKIKKFERREKLLEEVENQIKQYFNFKE). The segment covering 399 to 408 (KTSSPKTSIA) has biased composition (polar residues). A disordered region spans residues 399-420 (KTSSPKTSIAGSHRRSTRSSEN). Positions 410–420 (SHRRSTRSSEN) are enriched in basic residues.

This is an uncharacterized protein from Caenorhabditis elegans.